A 425-amino-acid chain; its full sequence is Serine hydroxymethyltransferase (425 aa).

(6S)-5,6,7,8-tetrahydrofolate is bound by residues leucine 124 and 128–130 (GHL). Lysine 233 bears the N6-(pyridoxal phosphate)lysine mark.

The protein belongs to the SHMT family. As to quaternary structure, homodimer. It depends on pyridoxal 5'-phosphate as a cofactor.

It localises to the cytoplasm. It catalyses the reaction (6R)-5,10-methylene-5,6,7,8-tetrahydrofolate + glycine + H2O = (6S)-5,6,7,8-tetrahydrofolate + L-serine. The protein operates within one-carbon metabolism; tetrahydrofolate interconversion. Its pathway is amino-acid biosynthesis; glycine biosynthesis; glycine from L-serine: step 1/1. Functionally, catalyzes the reversible interconversion of serine and glycine with tetrahydrofolate (THF) serving as the one-carbon carrier. This reaction serves as the major source of one-carbon groups required for the biosynthesis of purines, thymidylate, methionine, and other important biomolecules. Also exhibits THF-independent aldolase activity toward beta-hydroxyamino acids, producing glycine and aldehydes, via a retro-aldol mechanism. This is Serine hydroxymethyltransferase from Clavibacter sepedonicus (Clavibacter michiganensis subsp. sepedonicus).